A 591-amino-acid polypeptide reads, in one-letter code: Aspartate--tRNA(Asp/Asn) ligase (591 aa).

Position 176 (glutamate 176) interacts with L-aspartate. Residues 200 to 203 (QLFK) form an aspartate region. Arginine 222 contacts L-aspartate. ATP-binding positions include 222–224 (RDE) and glutamine 231. Histidine 450 serves as a coordination point for L-aspartate. Residue glutamate 484 participates in ATP binding. Arginine 491 is a binding site for L-aspartate. 536–539 (GLDR) is an ATP binding site.

It belongs to the class-II aminoacyl-tRNA synthetase family. Type 1 subfamily. In terms of assembly, homodimer.

It is found in the cytoplasm. It catalyses the reaction tRNA(Asx) + L-aspartate + ATP = L-aspartyl-tRNA(Asx) + AMP + diphosphate. Aspartyl-tRNA synthetase with relaxed tRNA specificity since it is able to aspartylate not only its cognate tRNA(Asp) but also tRNA(Asn). Reaction proceeds in two steps: L-aspartate is first activated by ATP to form Asp-AMP and then transferred to the acceptor end of tRNA(Asp/Asn). This Bacillus cereus (strain B4264) protein is Aspartate--tRNA(Asp/Asn) ligase.